A 545-amino-acid chain; its full sequence is SLAIN motif-containing protein 1 (545 aa).

Positions 14 to 53 form a coiled coil; sequence TTNGLVANAELEVKKLQELVRKLEKQNEQLRNRASAVSNC. Low complexity-rich tracts occupy residues 268 to 286 and 466 to 481; these read TTST…SLYS and IPSS…SGIP. Disordered stretches follow at residues 268–342 and 461–526; these read TTST…IRDC and QGGS…LQPP. A compositionally biased stretch (polar residues) spans 503 to 522; the sequence is STANGSSIPRSKIAQPQRSF.

This sequence belongs to the SLAIN motif-containing family.

The protein resides in the cytoplasm. It is found in the cytoskeleton. In terms of biological role, microtubule plus-end tracking protein that might be involved in the regulation of cytoplasmic microtubule dynamics, microtubule organization and microtubule elongation. The protein is SLAIN motif-containing protein 1 (slain1) of Xenopus tropicalis (Western clawed frog).